We begin with the raw amino-acid sequence, 150 residues long: Cilia- and flagella-associated protein 68 (150 aa).

2 mn regions span residues Thr99–Pro110 and Lys140–Ser150.

Belongs to the CFAP68 family. In terms of assembly, microtubule inner protein component of sperm flagellar doublet microtubules.

The protein localises to the cytoplasm. The protein resides in the cytoskeleton. It is found in the cilium axoneme. It localises to the flagellum axoneme. Its subcellular location is the nucleus. The protein localises to the cell projection. The protein resides in the cilium. In terms of biological role, microtubule inner protein (MIP) part of the dynein-decorated doublet microtubules (DMTs) in cilia axoneme, which is required for motile cilia beating. This is Cilia- and flagella-associated protein 68 (CFAP68) from Macaca fascicularis (Crab-eating macaque).